Reading from the N-terminus, the 858-residue chain is Envelope glycoprotein gp160 (858 aa).

Residues 1-19 (MMNQLLIAILLASACLVYC) form the signal peptide. The Extracellular portion of the chain corresponds to 20–679 (TQYVTVFYGV…LTSWVKYIQY (660 aa)). An N-linked (GlcNAc...) asparagine; by host glycan is attached at Asn-34. A disulfide bond links Cys-41 and Cys-54. N-linked (GlcNAc...) asparagine; by host glycosylation is found at Asn-67, Asn-76, Asn-119, Asn-120, Asn-151, Asn-166, Asn-179, Asn-192, Asn-193, Asn-196, Asn-206, Asn-238, Asn-241, Asn-248, Asn-272, Asn-278, Asn-289, Asn-300, Asn-310, Asn-367, Asn-371, Asn-400, Asn-410, Asn-447, Asn-463, and Asn-466. Intrachain disulfides connect Cys-98–Cys-214, Cys-105–Cys-205, Cys-110–Cys-163, Cys-227–Cys-257, and Cys-237–Cys-249. The interval 110-162 (CSSTESSTGNNTTSKSTSTTTTTPTDQEQEISEDTPCARADNCSGLGEEETIN) is V1. Positions 111–134 (SSTESSTGNNTTSKSTSTTTTTPT) are enriched in low complexity. Residues 111 to 142 (SSTESSTGNNTTSKSTSTTTTTPTDQEQEISE) form a disordered region. The tract at residues 163-205 (CQFNMTGLERDKKKQYNETWYSKDVVCETNNSTNQTQCYMNHC) is V2. A V3 region spans residues 305-339 (CKRPGNKTVKQIMLMSGHVFHSHYQPINKRPRQAW). Cys-305 and Cys-340 are joined by a disulfide. 2 cysteine pairs are disulfide-bonded: Cys-392–Cys-446 and Cys-399–Cys-419. The V4 stretch occupies residues 399–419 (CNMTWFLNWIENKTHRNYAPC). Residues 462–469 (NNQTNITF) are V5. The segment at 512-532 (GVFVLGFLGFLATAGSAMGAA) is fusion peptide. The segment at 575 to 591 (LQARVTAIEKYLQDQAR) is immunosuppression. N-linked (GlcNAc...) asparagine; by host glycans are attached at residues Asn-611, Asn-620, and Asn-636. The stretch at 624–645 (QEWEKQVRYLEANISKSLEQAQ) forms a coiled coil. Residues 657 to 678 (KLNSWDIFGNWFDLTSWVKYIQ) form an MPER; binding to GalCer region. The chain crosses the membrane as a helical span at residues 680 to 700 (GVLIIVAVIALRIVIYVVQML). The Cytoplasmic segment spans residues 701-858 (SRLRKGYRPV…IRQGAEIALL (158 aa)). The YXXV motif; contains endocytosis signal motif lies at 707 to 710 (YRPV). The S-palmitoyl cysteine; by host moiety is linked to residue Cys-773. The Di-leucine internalization motif signature appears at 857 to 858 (LL).

In terms of assembly, the mature envelope protein (Env) consists of a homotrimer of non-covalently associated gp120-gp41 heterodimers. The resulting complex protrudes from the virus surface as a spike. There seems to be as few as 10 spikes on the average virion. Interacts with human CD4, CCR5 and CXCR4, to form a P4HB/PDI-CD4-CXCR4-gp120 complex. Gp120 also interacts with the C-type lectins CD209/DC-SIGN and CLEC4M/DC-SIGNR (collectively referred to as DC-SIGN(R)). Gp120 and gp41 interact with GalCer. The mature envelope protein (Env) consists of a homotrimer of non-covalently associated gp120-gp41 heterodimers. The resulting complex protrudes from the virus surface as a spike. There seems to be as few as 10 spikes on the average virion. Post-translationally, specific enzymatic cleavages in vivo yield mature proteins. Envelope glycoproteins are synthesized as an inactive precursor that is heavily N-glycosylated and processed likely by host cell furin in the Golgi to yield the mature SU and TM proteins. The cleavage site between SU and TM requires the minimal sequence [KR]-X-[KR]-R. Palmitoylation of the transmembrane protein and of Env polyprotein (prior to its proteolytic cleavage) is essential for their association with host cell membrane lipid rafts. Palmitoylation is therefore required for envelope trafficking to classical lipid rafts, but not for viral replication.

The protein resides in the virion membrane. The protein localises to the host cell membrane. It localises to the host endosome membrane. Functionally, the surface protein gp120 (SU) attaches the virus to the host lymphoid cell by binding to the primary receptor CD4. This interaction induces a structural rearrangement creating a high affinity binding site for a chemokine coreceptor like CXCR4 and/or CCR5. This peculiar 2 stage receptor-interaction strategy allows gp120 to maintain the highly conserved coreceptor-binding site in a cryptic conformation, protected from neutralizing antibodies. Since CD4 also displays a binding site for the disulfide-isomerase P4HB/PDI, a P4HB/PDI-CD4-CXCR4-gp120 complex may form. In that complex, P4HB/PDI could reach and reduce gp120 disulfide bonds, causing major conformational changes in gp120. TXN, another PDI family member could also be involved in disulfide rearrangements in Env during fusion. These changes are transmitted to the transmembrane protein gp41 and are thought to activate its fusogenic potential by unmasking its fusion peptide. The surface protein gp120 is a ligand for CD209/DC-SIGN and CLEC4M/DC-SIGNR, which are respectively found on dendritic cells (DCs), and on endothelial cells of liver sinusoids and lymph node sinuses. These interactions allow capture of viral particles at mucosal surfaces by these cells and subsequent transmission to permissive cells. DCs are professional antigen presenting cells, critical for host immunity by inducing specific immune responses against a broad variety of pathogens. They act as sentinels in various tissues where they take up antigen, process it, and present it to T-cells following migration to lymphoid organs. HIV subverts the migration properties of dendritic cells to gain access to CD4+ T-cells in lymph nodes. Virus transmission to permissive T-cells occurs either in trans (without DCs infection, through viral capture and transmission), or in cis (following DCs productive infection, through the usual CD4-gp120 interaction), thereby inducing a robust infection. In trans infection, bound virions remain infectious over days and it is proposed that they are not degraded, but protected in non-lysosomal acidic organelles within the DCs close to the cell membrane thus contributing to the viral infectious potential during DCs' migration from the periphery to the lymphoid tissues. On arrival at lymphoid tissues, intact virions recycle back to DCs' cell surface allowing virus transmission to CD4+ T-cells. Virion capture also seems to lead to MHC-II-restricted viral antigen presentation, and probably to the activation of HIV-specific CD4+ cells. Its function is as follows. The transmembrane protein gp41 (TM) acts as a class I viral fusion protein. Under the current model, the protein has at least 3 conformational states: pre-fusion native state, pre-hairpin intermediate state, and post-fusion hairpin state. During fusion of viral and target intracellular membranes, the coiled coil regions (heptad repeats) assume a trimer-of-hairpins structure, positioning the fusion peptide in close proximity to the C-terminal region of the ectodomain. The formation of this structure appears to drive apposition and subsequent fusion of viral and target cell membranes. Complete fusion occurs in host cell endosomes and is dynamin-dependent, however some lipid transfer might occur at the plasma membrane. The virus undergoes clathrin-dependent internalization long before endosomal fusion, thus minimizing the surface exposure of conserved viral epitopes during fusion and reducing the efficacy of inhibitors targeting these epitopes. Membranes fusion leads to delivery of the nucleocapsid into the cytoplasm. In terms of biological role, the envelope glycoprotein gp160 precursor down-modulates cell surface CD4 antigen by interacting with it in the endoplasmic reticulum and blocking its transport to the cell surface. Functionally, the gp120-gp41 heterodimer seems to contribute to T-cell depletion during HIV-1 infection. The envelope glycoproteins expressed on the surface of infected cells induce apoptosis through an interaction with uninfected cells expressing the receptor (CD4) and the coreceptors CXCR4 or CCR5. This type of bystander killing may be obtained by at least three distinct mechanisms. First, the interaction between the 2 cells can induce cellular fusion followed by nuclear fusion within the syncytium. Syncytia are condemned to die from apoptosis. Second, the 2 interacting cells may not fuse entirely and simply exchange plasma membrane lipids, after a sort of hemifusion process, followed by rapid death. Third, it is possible that virus-infected cells, on the point of undergoing apoptosis, fuse with CD4-expressing cells, in which case apoptosis is rapidly transmitted from one cell to the other and thus occurs in a sort of contagious fashion. The gp120-gp41 heterodimer allows rapid transcytosis of the virus through CD4 negative cells such as simple epithelial monolayers of the intestinal, rectal and endocervical epithelial barriers. Both gp120 and gp41 specifically recognize glycosphingolipids galactosyl-ceramide (GalCer) or 3' sulfo-galactosyl-ceramide (GalS) present in the lipid rafts structures of epithelial cells. Binding to these alternative receptors allows the rapid transcytosis of the virus through the epithelial cells. This transcytotic vesicle-mediated transport of virions from the apical side to the basolateral side of the epithelial cells does not involve infection of the cells themselves. This is Envelope glycoprotein gp160 (env) from Homo sapiens (Human).